The chain runs to 199 residues: Transgelin-2 (199 aa).

Position 2 is an N-acetylalanine (alanine 2). Serine 11 is modified (phosphoserine). Residues lysine 17 and lysine 20 each carry the N6-acetyllysine modification. The 113-residue stretch at 24–136 folds into the Calponin-homology (CH) domain; sequence ADLEQILIQW…RTLMNLGGLA (113 aa). Position 163 is a phosphoserine (serine 163). A Glycyl lysine isopeptide (Lys-Gly) (interchain with G-Cter in SUMO2) cross-link involves residue lysine 171. The Calponin-like repeat unit spans residues 174–199; that stretch reads IGLQMGTNRGASQAGMTGYGMPRQIL. At threonine 180 the chain carries Phosphothreonine. Omega-N-methylarginine occurs at positions 182 and 196.

It belongs to the calponin family. As to expression, expressed in epididymis (at protein level).

In Homo sapiens (Human), this protein is Transgelin-2 (TAGLN2).